Here is a 252-residue protein sequence, read N- to C-terminus: UPF0246 protein Fjoh_4905 (252 aa).

The protein belongs to the UPF0246 family.

This chain is UPF0246 protein Fjoh_4905, found in Flavobacterium johnsoniae (strain ATCC 17061 / DSM 2064 / JCM 8514 / BCRC 14874 / CCUG 350202 / NBRC 14942 / NCIMB 11054 / UW101) (Cytophaga johnsonae).